Reading from the N-terminus, the 357-residue chain is MMPSTLQTLAKKTLATQHISKKYWPSEEYCYILKCCGLWWHDSPITIFTCIKQILIKTANFKHGLDLNLALMKAVQENNYELIMLFTEWGADINLGLITVNTECTRDLCQKLGAKEALSAKEILEIFYKIQYIKSSNNIIISHELISNHPLFLNNDQLKLRIVGELNAISINFILDEISFNEMLTRYWYSMAILYKLPAAIQYFYQSYKYFKDWRLICSLAYNNVFDLHEIYNKEKTDINIDEMMRLACRYDGNYTTIYYCFMLGADINQAMITSVMNLWDGNLFLCIDLGADVFEECMKIAIEDHNGVLESILSFKNYYSPDVSLLSLKTTDPEKINDLLDEDIYKSKNRLIYKSC.

Residues 66–98 form an ANK repeat; that stretch reads DLNLALMKAVQENNYELIMLFTEWGADINLGLI.

The protein belongs to the asfivirus MGF 360 family.

In terms of biological role, plays a role in virus cell tropism, and may be required for efficient virus replication in macrophages. This is Protein MGF 360-22R from African swine fever virus (isolate Tick/Malawi/Lil 20-1/1983) (ASFV).